Reading from the N-terminus, the 247-residue chain is Large ribosomal subunit protein uL30z (247 aa).

Belongs to the universal ribosomal protein uL30 family.

This chain is Large ribosomal subunit protein uL30z (RPL7A), found in Arabidopsis thaliana (Mouse-ear cress).